A 333-amino-acid polypeptide reads, in one-letter code: MEERLVSGEVLGEETALEPSLRPQYLHEYIGQDKIKENLKVFIEAAKLREETLDHVLLYGPPGLGKTTLAVIIANEMGVKLRATSGPALERPGDLAALLTSLEPGDVLFIDEIHRLPRAVEEVLYPAMEDYCLDITIGKGPDARTLRLDLPPFTLVGATTRAGALSAPLRDRFGVISRLEYYHVDQLAQIIERAAAILQIGIEREAALELARRARGTPRIANRLLRRVRDFAQVRGEGGITLPLAVEALERLQVDRLGLDQIDHKLLSAMIEKFAGGPVGLETLAAVIGEEAQTIEEVYEPYLMQIGLLQRTPRGRVVTPAAYTHLGMEVPKR.

The segment at 1-182 (MEERLVSGEV…FGVISRLEYY (182 aa)) is large ATPase domain (RuvB-L). Residues leucine 21, arginine 22, glycine 63, lysine 66, threonine 67, threonine 68, 129-131 (EDY), arginine 172, tyrosine 182, and arginine 219 contribute to the ATP site. Position 67 (threonine 67) interacts with Mg(2+). Positions 183–253 (HVDQLAQIIE…LAVEALERLQ (71 aa)) are small ATPAse domain (RuvB-S). Residues 256–333 (RLGLDQIDHK…THLGMEVPKR (78 aa)) are head domain (RuvB-H). DNA is bound by residues arginine 311 and arginine 316.

The protein belongs to the RuvB family. As to quaternary structure, homohexamer. Forms an RuvA(8)-RuvB(12)-Holliday junction (HJ) complex. HJ DNA is sandwiched between 2 RuvA tetramers; dsDNA enters through RuvA and exits via RuvB. An RuvB hexamer assembles on each DNA strand where it exits the tetramer. Each RuvB hexamer is contacted by two RuvA subunits (via domain III) on 2 adjacent RuvB subunits; this complex drives branch migration. In the full resolvosome a probable DNA-RuvA(4)-RuvB(12)-RuvC(2) complex forms which resolves the HJ.

It localises to the cytoplasm. It catalyses the reaction ATP + H2O = ADP + phosphate + H(+). Functionally, the RuvA-RuvB-RuvC complex processes Holliday junction (HJ) DNA during genetic recombination and DNA repair, while the RuvA-RuvB complex plays an important role in the rescue of blocked DNA replication forks via replication fork reversal (RFR). RuvA specifically binds to HJ cruciform DNA, conferring on it an open structure. The RuvB hexamer acts as an ATP-dependent pump, pulling dsDNA into and through the RuvAB complex. RuvB forms 2 homohexamers on either side of HJ DNA bound by 1 or 2 RuvA tetramers; 4 subunits per hexamer contact DNA at a time. Coordinated motions by a converter formed by DNA-disengaged RuvB subunits stimulates ATP hydrolysis and nucleotide exchange. Immobilization of the converter enables RuvB to convert the ATP-contained energy into a lever motion, pulling 2 nucleotides of DNA out of the RuvA tetramer per ATP hydrolyzed, thus driving DNA branch migration. The RuvB motors rotate together with the DNA substrate, which together with the progressing nucleotide cycle form the mechanistic basis for DNA recombination by continuous HJ branch migration. Branch migration allows RuvC to scan DNA until it finds its consensus sequence, where it cleaves and resolves cruciform DNA. In Geobacillus kaustophilus (strain HTA426), this protein is Holliday junction branch migration complex subunit RuvB.